The sequence spans 357 residues: U5 small nuclear ribonucleoprotein 40 kDa protein (357 aa).

Residue Lys-18 forms a Glycyl lysine isopeptide (Lys-Gly) (interchain with G-Cter in SUMO2) linkage. Arg-21 carries the post-translational modification Asymmetric dimethylarginine. WD repeat units follow at residues 64-103, 107-146, 149-189, 191-230, 233-272, 283-322, and 325-357; these read GHEGEVYCCKFHPNGSTLASAGFDRLILLWNVYGDCGNYA, GYSGAVMELHYNTDGSMLFSASTDKTVAVWDSETGERVKR, GHTS…AIQT, QNTYQVLAVTFNDTSDQIISGGIDNDIKVWDLRQNKLTYT, GHADSVTGLSLSSEGSYLLSNAMDNTVRVWDVRPFAPKER, NFEKNLLRCSWSPDGSKIAAGSADRSVCVWDTTSRRILYK, and GHAGSINEVAFHPDEPIIISASSDKRLYMGEIQ. A Glycyl lysine isopeptide (Lys-Gly) (interchain with G-Cter in SUMO2) cross-link involves residue Lys-270.

In terms of assembly, component of the pre-catalytic and catalytic spliceosome complexes. Component of the postcatalytic spliceosome P complex. Part of the U5 snRNP complex. Interacts with PRPF8. Component of the U4/U6-U5 tri-snRNP complex composed of the U4, U6 and U5 snRNAs and at least PRPF3, PRPF4, PRPF6, PRPF8, PRPF31, SNRNP200, TXNL4A, WDR57, SNRNP40, DDX23, CD2BP2, PPIH, SNU13, EFTUD2, SART1 and USP39. Component of the minor spliceosome, which splices U12-type introns.

It is found in the nucleus. Its function is as follows. Required for pre-mRNA splicing as component of the activated spliceosome. Component of the U5 small nuclear ribonucleoprotein (snRNP) complex and the U4/U6-U5 tri-snRNP complex, building blocks of the spliceosome. As a component of the minor spliceosome, involved in the splicing of U12-type introns in pre-mRNAs. This chain is U5 small nuclear ribonucleoprotein 40 kDa protein (SNRNP40), found in Pongo abelii (Sumatran orangutan).